The primary structure comprises 163 residues: 3-isopropylmalate dehydratase small subunit (163 aa).

It belongs to the LeuD family. LeuD type 2 subfamily. As to quaternary structure, heterodimer of LeuC and LeuD.

It catalyses the reaction (2R,3S)-3-isopropylmalate = (2S)-2-isopropylmalate. It participates in amino-acid biosynthesis; L-leucine biosynthesis; L-leucine from 3-methyl-2-oxobutanoate: step 2/4. Its function is as follows. Catalyzes the isomerization between 2-isopropylmalate and 3-isopropylmalate, via the formation of 2-isopropylmaleate. The polypeptide is 3-isopropylmalate dehydratase small subunit (Endomicrobium trichonymphae).